We begin with the raw amino-acid sequence, 298 residues long: Short-chain dehydrogenase reductase 4 (298 aa).

NAD(+) is bound at residue 50–74 (IITGGASGIGAEAVRLFTDHGAKVV). Ser-182 is a substrate binding site. The Proton acceptor role is filled by Tyr-195.

It belongs to the short-chain dehydrogenases/reductases (SDR) family.

This Arabidopsis thaliana (Mouse-ear cress) protein is Short-chain dehydrogenase reductase 4 (SDR4).